The chain runs to 346 residues: Protein RecA (346 aa).

An ATP-binding site is contributed by 66-73; the sequence is GPESSGKT.

Belongs to the RecA family.

It is found in the cytoplasm. In terms of biological role, can catalyze the hydrolysis of ATP in the presence of single-stranded DNA, the ATP-dependent uptake of single-stranded DNA by duplex DNA, and the ATP-dependent hybridization of homologous single-stranded DNAs. It interacts with LexA causing its activation and leading to its autocatalytic cleavage. The sequence is that of Protein RecA from Aromatoleum aromaticum (strain DSM 19018 / LMG 30748 / EbN1) (Azoarcus sp. (strain EbN1)).